The primary structure comprises 153 residues: Aspartate carbamoyltransferase regulatory chain (153 aa).

Residues Cys109, Cys114, Cys138, and Cys141 each coordinate Zn(2+).

Belongs to the PyrI family. In terms of assembly, contains catalytic and regulatory chains. It depends on Zn(2+) as a cofactor.

Its function is as follows. Involved in allosteric regulation of aspartate carbamoyltransferase. The chain is Aspartate carbamoyltransferase regulatory chain from Shigella flexneri serotype 5b (strain 8401).